Consider the following 638-residue polypeptide: Phosphomethylpyrimidine synthase (638 aa).

Substrate is bound by residues Asn233, Met262, Tyr291, His327, 347-349, 388-391, and Glu427; these read SRG and DGLR. His431 is a Zn(2+) binding site. Substrate is bound at residue Tyr454. His495 is a binding site for Zn(2+). [4Fe-4S] cluster is bound by residues Cys575, Cys578, and Cys583.

The protein belongs to the ThiC family. Homodimer. It depends on [4Fe-4S] cluster as a cofactor.

It carries out the reaction 5-amino-1-(5-phospho-beta-D-ribosyl)imidazole + S-adenosyl-L-methionine = 4-amino-2-methyl-5-(phosphooxymethyl)pyrimidine + CO + 5'-deoxyadenosine + formate + L-methionine + 3 H(+). It participates in cofactor biosynthesis; thiamine diphosphate biosynthesis. Its function is as follows. Catalyzes the synthesis of the hydroxymethylpyrimidine phosphate (HMP-P) moiety of thiamine from aminoimidazole ribotide (AIR) in a radical S-adenosyl-L-methionine (SAM)-dependent reaction. This Saccharophagus degradans (strain 2-40 / ATCC 43961 / DSM 17024) protein is Phosphomethylpyrimidine synthase.